Reading from the N-terminus, the 251-residue chain is PF03932 family protein CutC (251 aa).

It belongs to the CutC family.

Its subcellular location is the cytoplasm. The sequence is that of PF03932 family protein CutC from Bacteroides fragilis (strain ATCC 25285 / DSM 2151 / CCUG 4856 / JCM 11019 / LMG 10263 / NCTC 9343 / Onslow / VPI 2553 / EN-2).